A 315-amino-acid polypeptide reads, in one-letter code: Glucokinase-like protein CC_3167 (315 aa).

Belongs to the bacterial glucokinase family.

This Caulobacter vibrioides (strain ATCC 19089 / CIP 103742 / CB 15) (Caulobacter crescentus) protein is Glucokinase-like protein CC_3167.